Reading from the N-terminus, the 143-residue chain is MTIERTFSIIKPNAVAKNVIGAIIQRFESTGLTVVGAKMLQLTREQAEGFYAEHKGKPFFDSLVDFMISGPILVQVLEGEDAVRRNREIMGATNLANALAGTLRADYADSFTENAVHGSDSAESAAREIAYFFADGEVCTRIR.

The ATP site is built by lysine 11, phenylalanine 59, arginine 87, threonine 93, arginine 104, and asparagine 114. Histidine 117 (pros-phosphohistidine intermediate) is an active-site residue.

It belongs to the NDK family. As to quaternary structure, homotetramer. Mg(2+) is required as a cofactor.

The protein localises to the cytoplasm. The catalysed reaction is a 2'-deoxyribonucleoside 5'-diphosphate + ATP = a 2'-deoxyribonucleoside 5'-triphosphate + ADP. The enzyme catalyses a ribonucleoside 5'-diphosphate + ATP = a ribonucleoside 5'-triphosphate + ADP. Functionally, major role in the synthesis of nucleoside triphosphates other than ATP. The ATP gamma phosphate is transferred to the NDP beta phosphate via a ping-pong mechanism, using a phosphorylated active-site intermediate. This is Nucleoside diphosphate kinase from Sodalis glossinidius (strain morsitans).